We begin with the raw amino-acid sequence, 476 residues long: uncharacterized protein (476 aa).

The protein belongs to the herpesviridae US22 family.

This is an uncharacterized protein from Homo sapiens (Human).